The sequence spans 53 residues: Serine rich endogenous peptide 3 (53 aa).

Positions 1-26 (MTKKGPLNLRLLLLLLVVLLPSCSNC) are cleaved as a signal peptide. The short motif at 37 to 53 (SSEWRRKMITVWSKSSY) is the SCOOP motif element. A SxS motif essential for MIK2 binding motif is present at residues 49–51 (SKS).

It belongs to the serine rich endogenous peptide (SCOOP) phytocytokine family. In terms of assembly, interacts with MIK2 (via extracellular leucine-rich repeat domain); this interaction triggers the formation of complex between MIK2 and the BAK1/SERK3 and SERK4 coreceptors, and subsequent BAK1 activation by phosphorylation.

It is found in the cell membrane. Its subcellular location is the secreted. The protein resides in the extracellular space. It localises to the apoplast. Brassicaceae-specific phytocytokine (plant endogenous peptide released into the apoplast) perceived by MIK2 in a BAK1/SERK3 and SERK4 coreceptors-dependent manner, that modulates various physiological and antimicrobial processes including growth prevention and reactive oxygen species (ROS) response regulation. The polypeptide is Serine rich endogenous peptide 3 (Arabidopsis thaliana (Mouse-ear cress)).